Reading from the N-terminus, the 265-residue chain is MRLLIANDDGVFAPGIRTLADTLAIAGHEVVVVCPDRERSATGHSLTVFDPIRAEVVSDRFHPRIKAWACSGTPSDCVKLALGALLEQPPDFVVSGINQGSNLGTDILYSGTVSAAMEGVIEGIPSIAISLASFTVHDFQPAADFTNRLLKALENAPLPPKVLLNVNVPALPASEIAGVVITRQGIRRYHDLFQKRVDPRGKTYYWLAGEVVEEYPQDPNQAPTDVEAIAQNLISITPLTFDLTYGQGVQDLTEWLRTVQPLFNL.

Residues D8, D9, S40, and N98 each coordinate a divalent metal cation.

The protein belongs to the SurE nucleotidase family. Requires a divalent metal cation as cofactor.

Its subcellular location is the cytoplasm. The catalysed reaction is a ribonucleoside 5'-phosphate + H2O = a ribonucleoside + phosphate. Nucleotidase that shows phosphatase activity on nucleoside 5'-monophosphates. This is 5'-nucleotidase SurE from Thermosynechococcus vestitus (strain NIES-2133 / IAM M-273 / BP-1).